Here is a 925-residue protein sequence, read N- to C-terminus: Isoleucine--tRNA ligase (925 aa).

Residues 57–67 carry the 'HIGH' region motif; that stretch reads PYANGDIHIGH. Glu-553 contributes to the L-isoleucyl-5'-AMP binding site. The 'KMSKS' region signature appears at 594 to 598; that stretch reads KMSKS. Lys-597 contacts ATP. Zn(2+) contacts are provided by Cys-889, Cys-892, Cys-909, and Cys-912.

It belongs to the class-I aminoacyl-tRNA synthetase family. IleS type 1 subfamily. In terms of assembly, monomer. The cofactor is Zn(2+).

The protein localises to the cytoplasm. It catalyses the reaction tRNA(Ile) + L-isoleucine + ATP = L-isoleucyl-tRNA(Ile) + AMP + diphosphate. Functionally, catalyzes the attachment of isoleucine to tRNA(Ile). As IleRS can inadvertently accommodate and process structurally similar amino acids such as valine, to avoid such errors it has two additional distinct tRNA(Ile)-dependent editing activities. One activity is designated as 'pretransfer' editing and involves the hydrolysis of activated Val-AMP. The other activity is designated 'posttransfer' editing and involves deacylation of mischarged Val-tRNA(Ile). The sequence is that of Isoleucine--tRNA ligase from Brevibacillus brevis (strain 47 / JCM 6285 / NBRC 100599).